The chain runs to 267 residues: 4-hydroxy-tetrahydrodipicolinate reductase (267 aa).

Residues 9–14 (GVSGRM) and aspartate 35 each bind NAD(+). Arginine 36 contributes to the NADP(+) binding site. Residues 98–100 (GTT) and 122–125 (APNM) contribute to the NAD(+) site. The active-site Proton donor/acceptor is histidine 155. A (S)-2,3,4,5-tetrahydrodipicolinate-binding site is contributed by histidine 156. Lysine 159 functions as the Proton donor in the catalytic mechanism. Position 165–166 (165–166 (GT)) interacts with (S)-2,3,4,5-tetrahydrodipicolinate.

The protein belongs to the DapB family.

Its subcellular location is the cytoplasm. The enzyme catalyses (S)-2,3,4,5-tetrahydrodipicolinate + NAD(+) + H2O = (2S,4S)-4-hydroxy-2,3,4,5-tetrahydrodipicolinate + NADH + H(+). It catalyses the reaction (S)-2,3,4,5-tetrahydrodipicolinate + NADP(+) + H2O = (2S,4S)-4-hydroxy-2,3,4,5-tetrahydrodipicolinate + NADPH + H(+). The protein operates within amino-acid biosynthesis; L-lysine biosynthesis via DAP pathway; (S)-tetrahydrodipicolinate from L-aspartate: step 4/4. In terms of biological role, catalyzes the conversion of 4-hydroxy-tetrahydrodipicolinate (HTPA) to tetrahydrodipicolinate. This is 4-hydroxy-tetrahydrodipicolinate reductase from Thiobacillus denitrificans (strain ATCC 25259 / T1).